Here is a 627-residue protein sequence, read N- to C-terminus: Anti-CBASS protein Acb1 (627 aa).

Tyr105 is a binding site for 3',3'-cGAMP. Tyr105 provides a ligand contact to 3',3'-cUAMP. A disordered region spans residues 437–474 (LADQPETESANENTEQPESGEEGEEGQPTRRAANDAKP). Residues His508, Thr510, His584, and Thr586 contribute to the active site. 2 residues coordinate 3',3'-cGAMP: Glu614 and Trp620. The 3',3'-cUAMP site is built by Glu614 and Trp620.

This sequence belongs to the anti-CBASS protein Acb1 family.

It catalyses the reaction 3',3'-cUAMP + H2O = U[3'-5']pAp[3'] + H(+). The catalysed reaction is 3',3',3'-c-tri-AMP + H2O = A[3'-5']pA[3'-5']pAp[3'] + H(+). It carries out the reaction 3',3',3'-cAAG + H2O = G[3'-5']pA[3'-5']pAp[3'] + H(+). The enzyme catalyses 3',3',3'-cAAG + H2O = A[3'-5']pG[3'-5']pAp[3'] + H(+). It catalyses the reaction 3',3'-cGAMP + H2O = G[3'-5']pAp[3'] + H(+). Its function is as follows. Counteracts or regulates the endogenous CBASS antiviral defense system. Phosphodiesterase that enables metal-independent hydrolysis of the host cyclic di- and trinucleotide CBASS signals such as 3'3'-cGAMP, 3'3'cUA, and 3'3'3'-cAAA. The sequence is that of Anti-CBASS protein Acb1 from Caulobacter sp. (strain RHG1).